We begin with the raw amino-acid sequence, 89 residues long: Large ribosomal subunit protein bL27 (89 aa).

The disordered stretch occupies residues 1 to 21; sequence MAHKKAGGSSRNGRDSQSKRL.

The protein belongs to the bacterial ribosomal protein bL27 family.

In Rhizobium leguminosarum bv. trifolii (strain WSM2304), this protein is Large ribosomal subunit protein bL27.